A 662-amino-acid polypeptide reads, in one-letter code: Probable quinol oxidase subunit 1 (662 aa).

Helical transmembrane passes span 14–34 and 58–78; these read WMIT…IAVI and IMYL…ALLI. A Fe(II)-heme a-binding site is contributed by histidine 102. A run of 8 helical transmembrane segments spans residues 103–123, 140–160, 187–207, 228–248, 273–293, 311–331, 336–356, and 376–396; these read GVIM…NIVV, VSFW…IIGG, IAIQ…FVTI, FITT…LALM, FFWV…FGIY, MVWA…HHFF, GALI…PTGV, and MLFS…GVML. Residues histidine 279, tyrosine 283, histidine 328, and histidine 329 each coordinate Cu cation. The 1'-histidyl-3'-tyrosine (His-Tyr) cross-link spans 279–283; sequence HPEVY. Residue histidine 414 coordinates heme a3. A run of 5 helical transmembrane segments spans residues 415–435, 451–471, 493–513, 587–604, and 608–627; these read FHYT…IFWY, CFWF…ILGL, ISTI…VSIV, PVGF…FFLI, and VIPA…YRSF. Histidine 416 provides a ligand contact to Fe(II)-heme a.

Belongs to the heme-copper respiratory oxidase family. Requires Cu cation as cofactor. It depends on ferriheme a as a cofactor. Heme A3. serves as cofactor.

The protein localises to the cell membrane. The enzyme catalyses 2 a quinol + O2 = 2 a quinone + 2 H2O. The protein operates within energy metabolism; oxidative phosphorylation. Catalyzes quinol oxidation with the concomitant reduction of oxygen to water. The chain is Probable quinol oxidase subunit 1 (qoxB) from Staphylococcus aureus (strain MRSA252).